We begin with the raw amino-acid sequence, 652 residues long: Apicoplast pyruvate carrier 2 (652 aa).

Residues 1 to 45 (MSAFPASPQPSAFPASPQPSAFPASPQPSASPVSPRHCVSPSSGT) lie on the Cytoplasmic side of the membrane. The interval 1 to 53 (MSAFPASPQPSAFPASPQPSAFPASPQPSASPVSPRHCVSPSSGTLPSSSSPS) is disordered. A run of 12 helical transmembrane segments spans residues 46 to 66 (LPSSSSPSVSSCALRGLSSSS), 126 to 146 (NLLPYLIGFIRNAQATSAVSY), 167 to 187 (GTTLEKKAGTKKTAFLGSAWM), 189 to 209 (LGLALCGVCTHDLSLFLIAYG), 212 to 232 (TALGCGVAYPVPLAATLKLSP), 278 to 298 (LPYLSSVASDTASASRLSSLN), 345 to 365 (LVDPERTSAADEAAADAAERQ), 385 to 405 (SCSASQVFASLVLTPQDICSS), 417 to 437 (LSWQSLFFVQLFWKVLPLYPE), 445 to 465 (AAPAPLDSLFASVVRRVPRAL), 467 to 487 (SASRPDPRALHAAADAWSLTG), and 515 to 535 (LWGYIGGGIGYMRSTVVMNAL). The Cytoplasmic portion of the chain corresponds to 536 to 652 (TAPCLFALST…LPYRFPTYSP (117 aa)).

This sequence belongs to the major facilitator superfamily. As to quaternary structure, interacts with apicoplast pyruvate carrier 1.

The protein localises to the plastid. It is found in the apicoplast. It localises to the membrane. In terms of biological role, along with apicoplast pyruvate carrier 1, forms apicoplast pyruvate carrier (APC) complex, which transports pyruvate into the apicoplast and may also transport amino acids like methionine, serine, glycine and tryptophan with low efficiency. Required for maintaining pyruvate-dependent metabolic activities in the apicoplast, such as synthesis of fatty acids, isopentenyl pyrophosphate (IPP), dimethylallyl pyrophosphate (DMAPP) and methylerythritol 4-phosphate (MEP). Required for maintaining the integrity of the apicoplast. Required for normal parasite growth. The protein is Apicoplast pyruvate carrier 2 of Toxoplasma gondii.